The following is a 431-amino-acid chain: Cyclic GMP-AMP synthase-like receptor (431 aa).

ATP contacts are provided by residues S73 and 85-87 (EFD). Residues E85, D87, and D212 each coordinate Mg(2+). D212 is a GTP binding site. ATP-binding positions include K290 and 304-308 (SYALK). E316 is a Mn(2+) binding site.

It belongs to the mab-21 family. Requires Mg(2+) as cofactor. The cofactor is Mn(2+).

The enzyme catalyses GTP + ATP = 2',3'-cGAMP + 2 diphosphate. It carries out the reaction GTP + ATP = pppGp(2'-5')A + diphosphate. The catalysed reaction is pppGp(2'-5')A = 2',3'-cGAMP + diphosphate. Its function is as follows. Nucleotidyltransferase that catalyzes the formation of cyclic GMP-AMP (2',3'-cGAMP) from ATP and GTP and plays a key role in innate immunity. Acts as a key sensor of double-stranded RNA (dsRNA), the presence of dsRNA in the cytoplasm being a danger signal that triggers the immune responses. Directly binds dsRNA, activating the nucleotidyltransferase activity, leading to synthesis of 2',3'-cGAMP, a second messenger that binds to and activates Sting, thereby triggering the immune response via activation of the NF-kappa-B transcription factor. The protein is Cyclic GMP-AMP synthase-like receptor of Frankliniella occidentalis (Western flower thrips).